We begin with the raw amino-acid sequence, 345 residues long: Transcription factor MYB106 (345 aa).

2 consecutive HTH myb-type domains span residues 9–61 and 62–116; these read KAGL…TNYL and RPDI…KKRL. 2 consecutive DNA-binding regions (H-T-H motif) follow at residues 37–61 and 89–112; these read WRSL…TNYL and WSAI…NTHL.

Expressed in trichomes, stems, carpels, petals and stamens.

The protein resides in the nucleus. Functionally, functions as a repressor of epidermal cell outgrowth and negatively regulate trichome branch formation. Acts both as a positive and a negative regulator of cellular outgrowth. Promotes both trichome expansion and branch formation. Coordinately with WIN1/SHN1, participates in the regulation of cuticle biosynthesis and wax accumulation in reproductive organs and trichomes. Functions in cuticle nanoridge formation in petals and stamens, and in morphogenesis of petal conical cells and trichomes. May play a role in the regulation of cuticle formation in vegetative organs. This is Transcription factor MYB106 from Arabidopsis thaliana (Mouse-ear cress).